The primary structure comprises 213 residues: Outer-membrane lipoprotein LolB (213 aa).

The first 24 residues, 1 to 24 (MNNLSYFTKTKLVWVILSLSLLSA), serve as a signal peptide directing secretion. Residue Cys25 is the site of N-palmitoyl cysteine attachment. Residue Cys25 is the site of S-diacylglycerol cysteine attachment.

The protein belongs to the LolB family. As to quaternary structure, monomer.

It localises to the cell outer membrane. Plays a critical role in the incorporation of lipoproteins in the outer membrane after they are released by the LolA protein. The protein is Outer-membrane lipoprotein LolB of Shewanella woodyi (strain ATCC 51908 / MS32).